Reading from the N-terminus, the 292-residue chain is Elongation factor Ts (292 aa).

The segment at 80 to 83 (TDFV) is involved in Mg(2+) ion dislocation from EF-Tu.

The protein belongs to the EF-Ts family.

It is found in the cytoplasm. In terms of biological role, associates with the EF-Tu.GDP complex and induces the exchange of GDP to GTP. It remains bound to the aminoacyl-tRNA.EF-Tu.GTP complex up to the GTP hydrolysis stage on the ribosome. This Cupriavidus pinatubonensis (strain JMP 134 / LMG 1197) (Cupriavidus necator (strain JMP 134)) protein is Elongation factor Ts.